A 101-amino-acid chain; its full sequence is Cell cycle protein GpsB (101 aa).

Positions 34–71 (LDMVIKDYETFNQEIEKLQQENLHLSKQLEEAVEQGKR) form a coiled coil.

This sequence belongs to the GpsB family. Forms polymers through the coiled coil domains. Interacts with PBP1, MreC and EzrA.

It localises to the cytoplasm. Functionally, divisome component that associates with the complex late in its assembly, after the Z-ring is formed, and is dependent on DivIC and PBP2B for its recruitment to the divisome. Together with EzrA, is a key component of the system that regulates PBP1 localization during cell cycle progression. Its main role could be the removal of PBP1 from the cell pole after pole maturation is completed. Also contributes to the recruitment of PBP1 to the division complex. Not essential for septum formation. This chain is Cell cycle protein GpsB, found in Bacillus pumilus (strain SAFR-032).